A 312-amino-acid chain; its full sequence is Cathepsin O (312 aa).

Positions 1–23 (MKPQLVNLLLLCCCCLGRHGVAG) are cleaved as a signal peptide. Positions 24–98 (TWSWSHQREA…EGQRPIPNVS (75 aa)) are cleaved as a propeptide — activation peptide. N-linked (GlcNAc...) asparagine glycosylation is found at Asn53 and Asn96. 3 disulfide bridges follow: Cys120–Cys161, Cys154–Cys195, and Cys253–Cys301. Cys123 is a catalytic residue. Catalysis depends on residues His260 and Asn280.

The protein belongs to the peptidase C1 family.

It localises to the lysosome. It catalyses the reaction The recombinant human enzyme hydrolyzes synthetic endopeptidase substrates including Z-Phe-Arg-NHMec and Z-Arg-Arg-NHMec.. Functionally, proteolytic enzyme possibly involved in normal cellular protein degradation and turnover. This is Cathepsin O (Ctso) from Mus musculus (Mouse).